The primary structure comprises 674 residues: MESSTSSPQPPLSDPLDPFPQRSLEPGDIAVLVLYFLFVLAVGLWSTVKTKRDTVKGYFLAGGDMVWWPVGASLFASNVGSGHFVGLAGSGAATGISVAAYEFNGMFSVLMLAWIFLPIYIAGQVTTMPEYLRRRFGGSRIAITLAVLYLFIYIFTKISVDMYAGAIFIQQSLHLDLYLSVVGLLAVTALYTVAGGLAAVIYTDALQTLIMLVGALTLMGYSFAAVGGMEGLQEKYFLALPSNRSENSSCGLPREDAFHLFRDPLTSDLPWPGILFGMSIPSLWYWCTDQVIVQRSLAAKNLSHAKGGSLMAAYLKVLPLFIMVFPGMVSRILFPDQVACADPETCQRVCNNPSGCSDIAYPKLVLELLPTGLRGLMMAVMVAALMSSLTSIFNSASTIFTMDLWNHVRPRASEKELMIVGRVFVLLLVLVSVLWIPVVQASQGGQLFVYIQAISSYLQPPVAMVFVLGCFWKRANEKGAFWGLVLGLLLGFIRLILDFIYVEPACHQPDERPSVVKNVHYLYFSMILSSVTVLTVTVMSLLTEPPSKEMISHLTWFTRRDPVVQKAQVPAATPLPPALSHNGTAEANSASIQLETIQEGASKAHSSDVTPKQSRVVRALLWLCGMEGKSTEQAPRPAEPVLASIEENPVVKTLLDVNCLLCICCAFFLWGYFA.

At 1–27 the chain is on the extracellular side; that stretch reads MESSTSSPQPPLSDPLDPFPQRSLEPG. Residues 28–48 traverse the membrane as a helical segment; sequence DIAVLVLYFLFVLAVGLWSTV. The Cytoplasmic segment spans residues 49-56; that stretch reads KTKRDTVK. Residues 57–77 form a helical membrane-spanning segment; that stretch reads GYFLAGGDMVWWPVGASLFAS. At 78-102 the chain is on the extracellular side; it reads NVGSGHFVGLAGSGAATGISVAAYE. The helical transmembrane segment at 103-123 threads the bilayer; that stretch reads FNGMFSVLMLAWIFLPIYIAG. Topologically, residues 124–140 are cytoplasmic; it reads QVTTMPEYLRRRFGGSR. A helical transmembrane segment spans residues 141–161; the sequence is IAITLAVLYLFIYIFTKISVD. Topologically, residues 162–180 are extracellular; sequence MYAGAIFIQQSLHLDLYLS. A helical transmembrane segment spans residues 181-201; it reads VVGLLAVTALYTVAGGLAAVI. Residues 202-208 are Cytoplasmic-facing; the sequence is YTDALQT. The chain crosses the membrane as a helical span at residues 209-229; that stretch reads LIMLVGALTLMGYSFAAVGGM. At 230-272 the chain is on the extracellular side; the sequence is EGLQEKYFLALPSNRSENSSCGLPREDAFHLFRDPLTSDLPWP. Residues 273–293 traverse the membrane as a helical segment; sequence GILFGMSIPSLWYWCTDQVIV. Residues 294-308 lie on the Cytoplasmic side of the membrane; the sequence is QRSLAAKNLSHAKGG. Residues 309–329 traverse the membrane as a helical segment; it reads SLMAAYLKVLPLFIMVFPGMV. Topologically, residues 330–375 are extracellular; it reads SRILFPDQVACADPETCQRVCNNPSGCSDIAYPKLVLELLPTGLRG. Residues 376 to 396 traverse the membrane as a helical segment; sequence LMMAVMVAALMSSLTSIFNSA. The Cytoplasmic portion of the chain corresponds to 397-418; that stretch reads STIFTMDLWNHVRPRASEKELM. Residues 419 to 439 form a helical membrane-spanning segment; that stretch reads IVGRVFVLLLVLVSVLWIPVV. At 440–446 the chain is on the extracellular side; sequence QASQGGQ. Residues 447-467 traverse the membrane as a helical segment; it reads LFVYIQAISSYLQPPVAMVFV. Topologically, residues 468-479 are cytoplasmic; it reads LGCFWKRANEKG. The helical transmembrane segment at 480–500 threads the bilayer; that stretch reads AFWGLVLGLLLGFIRLILDFI. At 501-521 the chain is on the extracellular side; sequence YVEPACHQPDERPSVVKNVHY. A helical transmembrane segment spans residues 522-542; it reads LYFSMILSSVTVLTVTVMSLL. Topologically, residues 543–653 are cytoplasmic; sequence TEPPSKEMIS…SIEENPVVKT (111 aa). A helical membrane pass occupies residues 654-674; it reads LLDVNCLLCICCAFFLWGYFA.

The protein belongs to the sodium:solute symporter (SSF) (TC 2.A.21) family. As to expression, expressed in brain, lung and kidney. In the kidney, strongly expressed in the cortex, at the luminal side of proximal convoluted tubules and in BBMVs. Weaker expression observed in the medulla (at protein level).

Its subcellular location is the membrane. It localises to the apical cell membrane. The enzyme catalyses myo-inositol(out) + 2 Na(+)(out) = myo-inositol(in) + 2 Na(+)(in). It carries out the reaction 1D-chiro-inositol(out) + 2 Na(+)(out) = 1D-chiro-inositol(in) + 2 Na(+)(in). The catalysed reaction is D-glucose(out) + 2 Na(+)(out) = D-glucose(in) + 2 Na(+)(in). It catalyses the reaction D-xylose(out) + 2 Na(+)(out) = D-xylose(in) + 2 Na(+)(in). With respect to regulation, MI transport activity stimulated five-fold under 24 hour hypertonic shock conditions. MI inward currents were gradually inhibited as increasing amounts of phlorizin were added to the superfusion medium. When sodium is replaced by potassium, MI uptake is dramatically reduced and in the presence of L-fucose or D-chiro-inositol (DCI), the specific accumulation of tracer amounts of MI is also reduced. In terms of biological role, involved in the sodium-dependent cotransport of myo-inositol (MI) with a Na(+):MI stoichiometry of 2:1. Exclusively responsible for apical MI transport and absorption in intestine. Can also transport D-chiro-inositol (DCI) but not L-fucose. Exhibits stereospecific cotransport of both D-glucose and D-xylose. May induce apoptosis through the TNF-alpha, PDCD1 pathway. May play a role in the regulation of MI concentration in serum, involving reabsorption in at least the proximal tubule of the kidney. The protein is Sodium/myo-inositol cotransporter 2 of Oryctolagus cuniculus (Rabbit).